Reading from the N-terminus, the 331-residue chain is DNA polymerase IV (331 aa).

One can recognise a UmuC domain in the interval 1–174 (FFAAVEMRDN…LPLAKIPGVG (174 aa)). Asp92 provides a ligand contact to Mg(2+). Residue Glu93 is part of the active site.

The protein belongs to the DNA polymerase type-Y family. Monomer. The cofactor is Mg(2+).

The protein resides in the cytoplasm. It catalyses the reaction DNA(n) + a 2'-deoxyribonucleoside 5'-triphosphate = DNA(n+1) + diphosphate. In terms of biological role, poorly processive, error-prone DNA polymerase involved in untargeted mutagenesis. Copies undamaged DNA at stalled replication forks, which arise in vivo from mismatched or misaligned primer ends. These misaligned primers can be extended by PolIV. Exhibits no 3'-5' exonuclease (proofreading) activity. May be involved in translesional synthesis, in conjunction with the beta clamp from PolIII. The chain is DNA polymerase IV from Escherichia fergusonii.